The chain runs to 362 residues: Somatostatin receptor type 5 (362 aa).

Polar residues predominate over residues 1–10 (MEPLSLTSTP). Positions 1–24 (MEPLSLTSTPSWNASAASSSSHNW) are disordered. At 1-35 (MEPLSLTSTPSWNASAASSSSHNWSLVDPVSPMGA) the chain is on the extracellular side. Low complexity predominate over residues 11–24 (SWNASAASSSSHNW). N-linked (GlcNAc...) asparagine glycans are attached at residues Asn13 and Asn23. Residues 36-63 (RAVLVPVLYLLVCTVGLGGNTLVIYVVL) traverse the membrane as a helical segment. Residues 64–73 (RYAKMKTVTN) are Cytoplasmic-facing. A helical membrane pass occupies residues 74 to 99 (VYILNLAVADVLFMLGLPFLATQNAV). At 100 to 110 (SYWPFGSFLCR) the chain is on the extracellular side. Cys109 and Cys184 are joined by a disulfide. The helical transmembrane segment at 111–132 (LVMTLDGINQFTSIFCLMVMSV) threads the bilayer. At 133-154 (DRYLAVVHPLRSARWRRPRVAK) the chain is on the cytoplasmic side. Residues 155–175 (LASAAVWVFSLLMSLPLLVFA) form a helical membrane-spanning segment. The Extracellular portion of the chain corresponds to 176 to 195 (DVQEGWGTCNLSWPEPVGLW). N-linked (GlcNAc...) asparagine glycosylation occurs at Asn185. A helical membrane pass occupies residues 196 to 220 (GAAFITYTSVLGFFGPLLVICLCYL). The Cytoplasmic segment spans residues 221–246 (LIVVKVKAAGMRVGSSRRRRSERKVT). Residues 247 to 272 (RMVVVVVLVFVGCWLPFFIVNIVNLA) form a helical membrane-spanning segment. At 273–282 (FTLPEEPTSA) the chain is on the extracellular side. Residues 283–307 (GLYFFVVVLSYANSCANPLLYGFLS) form a helical membrane-spanning segment. Over 308 to 362 (DNFRQSFRKALCLRRGYGVEDADAIEPRPDKSGRPQTTLPTRSCEANGLMQTSRL) the chain is Cytoplasmic. A lipid anchor (S-palmitoyl cysteine; by ZDHHC5) is attached at Cys319. The interval 330-362 (DAIEPRPDKSGRPQTTLPTRSCEANGLMQTSRL) is disordered.

Belongs to the G-protein coupled receptor 1 family. Heterodimer with SSTR2. Heterodimerization with SSTR2 increases cell growth inhibition activity of SSTR2. In terms of processing, palmitoylated at Cys-319 by ZDHHC5, but not ZDHHC8. Palmitoylation creates an additional intracellular loop which is thought to be important for efficient coupling to G-proteins and may target the protein to lipid rafts. Expressed in adult brain but not in liver, heart, spleen, or kidney.

The protein resides in the cell membrane. Its function is as follows. Receptor for somatostatin-28. The activity of this receptor is mediated by G proteins which inhibit adenylyl cyclase. Increases cell growth inhibition activity of SSTR2 following heterodimerization. This chain is Somatostatin receptor type 5 (Sstr5), found in Mus musculus (Mouse).